Here is a 176-residue protein sequence, read N- to C-terminus: NAD(P)H-quinone oxidoreductase subunit 6, chloroplastic (176 aa).

5 helical membrane-spanning segments follow: residues 10 to 30 (FLLV…VLLP), 32 to 52 (PIYS…FYIL), 61 to 81 (AQLL…VMFM), 92 to 112 (LWTV…ISLI), and 152 to 172 (FFLP…GAIA).

The protein belongs to the complex I subunit 6 family. As to quaternary structure, NDH is composed of at least 16 different subunits, 5 of which are encoded in the nucleus.

It localises to the plastid. The protein localises to the chloroplast thylakoid membrane. It catalyses the reaction a plastoquinone + NADH + (n+1) H(+)(in) = a plastoquinol + NAD(+) + n H(+)(out). The catalysed reaction is a plastoquinone + NADPH + (n+1) H(+)(in) = a plastoquinol + NADP(+) + n H(+)(out). NDH shuttles electrons from NAD(P)H:plastoquinone, via FMN and iron-sulfur (Fe-S) centers, to quinones in the photosynthetic chain and possibly in a chloroplast respiratory chain. The immediate electron acceptor for the enzyme in this species is believed to be plastoquinone. Couples the redox reaction to proton translocation, and thus conserves the redox energy in a proton gradient. In Solanum lycopersicum (Tomato), this protein is NAD(P)H-quinone oxidoreductase subunit 6, chloroplastic (ndhG).